A 756-amino-acid chain; its full sequence is Cellulose synthase catalytic subunit [UDP-forming] (756 aa).

4 consecutive transmembrane segments (helical) span residues Ala27–Leu47, Asn49–Gly69, Gly106–Ser126, and Leu167–Leu187. Residues Asp147–Ile242 form a catalytic subdomain A region. Asp189 is an active-site residue. The substrate site is built by Asp238 and Asp240. The tract at residues Glu319–Met379 is catalytic subdomain B. Residue Asp335 is part of the active site. 5 helical membrane passes run Phe409–Gly429, Ile432–Ile452, Val470–Pro490, Asn517–Val537, and Leu551–Gly571. The PilZ domain maps to Gln576–Gly681. The tract at residues Asn721–Ser756 is disordered. Over residues Thr740–Ser756 the composition is skewed to polar residues.

The protein belongs to the glycosyltransferase 2 family. It depends on Mg(2+) as a cofactor.

It is found in the cell inner membrane. It carries out the reaction [(1-&gt;4)-beta-D-glucosyl](n) + UDP-alpha-D-glucose = [(1-&gt;4)-beta-D-glucosyl](n+1) + UDP + H(+). Its pathway is glycan metabolism; bacterial cellulose biosynthesis. With respect to regulation, activated by bis-(3'-5') cyclic diguanylic acid (c-di-GMP). Functionally, catalytic subunit of cellulose synthase. It polymerizes uridine 5'-diphosphate glucose to cellulose. The thick cellulosic mats generated by this enzyme probably provide a specialized protective environment to the bacterium. This is Cellulose synthase catalytic subunit [UDP-forming] (bcsA) from Komagataeibacter sucrofermentans (strain ATCC 700178 / DSM 15973 / CECT 7291 / JCM 9730 / LMG 18788 / BPR 2001) (Acetobacter xylinus subsp. sucrofermentans).